A 113-amino-acid chain; its full sequence is MEAKAIAKFIRVSPRKARMVVDLIRGKKVEEALAILRYTPNKAAAAVTKVVKSAAANAEHNNDMDKEELVVSQIFVDQGPSLKRMMPRAMGRADIIKRRTSHITVVVSDKKEG.

This sequence belongs to the universal ribosomal protein uL22 family. In terms of assembly, part of the 50S ribosomal subunit.

Functionally, this protein binds specifically to 23S rRNA; its binding is stimulated by other ribosomal proteins, e.g. L4, L17, and L20. It is important during the early stages of 50S assembly. It makes multiple contacts with different domains of the 23S rRNA in the assembled 50S subunit and ribosome. The globular domain of the protein is located near the polypeptide exit tunnel on the outside of the subunit, while an extended beta-hairpin is found that lines the wall of the exit tunnel in the center of the 70S ribosome. This chain is Large ribosomal subunit protein uL22, found in Desulforamulus reducens (strain ATCC BAA-1160 / DSM 100696 / MI-1) (Desulfotomaculum reducens).